We begin with the raw amino-acid sequence, 126 residues long: UPF0538 protein C2orf76 homolog (126 aa).

It belongs to the UPF0538 family.

This chain is UPF0538 protein C2orf76 homolog, found in Pongo abelii (Sumatran orangutan).